The primary structure comprises 79 residues: Acyl carrier protein (79 aa).

In terms of domain architecture, Carrier spans 2 to 77 (ESIEQRVKKI…QAVDYINSHG (76 aa)). An O-(pantetheine 4'-phosphoryl)serine modification is found at Ser37.

Belongs to the acyl carrier protein (ACP) family. In terms of processing, 4'-phosphopantetheine is transferred from CoA to a specific serine of apo-ACP by AcpS. This modification is essential for activity because fatty acids are bound in thioester linkage to the sulfhydryl of the prosthetic group.

The protein localises to the cytoplasm. It functions in the pathway lipid metabolism; fatty acid biosynthesis. Carrier of the growing fatty acid chain in fatty acid biosynthesis. This Bordetella parapertussis (strain 12822 / ATCC BAA-587 / NCTC 13253) protein is Acyl carrier protein.